The chain runs to 66 residues: Large ribosomal subunit protein bL32 (66 aa).

Residues 1–20 (MAVPKRRKSKSKVRTKRAHH) form a disordered region.

It belongs to the bacterial ribosomal protein bL32 family.

The protein is Large ribosomal subunit protein bL32 of Leptospira borgpetersenii serovar Hardjo-bovis (strain JB197).